The chain runs to 537 residues: Putative cysteine ligase BshC (537 aa).

Residues 422–450 (IEKVEGMIEQQRRLNKDLLDEVAGNQNNI) adopt a coiled-coil conformation.

It belongs to the BshC family.

Its function is as follows. Involved in bacillithiol (BSH) biosynthesis. May catalyze the last step of the pathway, the addition of cysteine to glucosamine malate (GlcN-Mal) to generate BSH. The protein is Putative cysteine ligase BshC of Staphylococcus aureus (strain Mu3 / ATCC 700698).